Reading from the N-terminus, the 348-residue chain is tRNA N6-adenosine threonylcarbamoyltransferase (348 aa).

Residues His-111 and His-115 each contribute to the Fe cation site. Substrate contacts are provided by residues Leu-134 to Gly-138, Asp-167, Gly-180, Asp-184, and Asn-280. A Fe cation-binding site is contributed by Asp-308.

Belongs to the KAE1 / TsaD family. It depends on Fe(2+) as a cofactor.

The protein resides in the cytoplasm. It catalyses the reaction L-threonylcarbamoyladenylate + adenosine(37) in tRNA = N(6)-L-threonylcarbamoyladenosine(37) in tRNA + AMP + H(+). Required for the formation of a threonylcarbamoyl group on adenosine at position 37 (t(6)A37) in tRNAs that read codons beginning with adenine. Is involved in the transfer of the threonylcarbamoyl moiety of threonylcarbamoyl-AMP (TC-AMP) to the N6 group of A37, together with TsaE and TsaB. TsaD likely plays a direct catalytic role in this reaction. The chain is tRNA N6-adenosine threonylcarbamoyltransferase from Rippkaea orientalis (strain PCC 8801 / RF-1) (Cyanothece sp. (strain PCC 8801)).